The chain runs to 134 residues: MSWQAYVDDHLMCDIEGHEGHRLTAAAIVGHDGSVWAQSATFPQFKPEEMNGIMTDFNEPGHLAPTGLHLGGTKYMVIQGEAGAVIRGKKGSGGITTKKTGQALVFGIYEEPVTPGQCNMVVERLGDYLLEQGL.

A disulfide bond links cysteine 13 and cysteine 118. An Involved in PIP2 interaction motif is present at residues 84 to 100 (AVIRGKKGSGGITTKKT). Threonine 114 carries the post-translational modification Phosphothreonine.

It belongs to the profilin family. Occurs in many kinds of cells as a complex with monomeric actin in a 1:1 ratio. Post-translationally, phosphorylated by MAP kinases.

The protein localises to the cytoplasm. Its subcellular location is the cytoskeleton. Its function is as follows. Binds to actin and affects the structure of the cytoskeleton. At high concentrations, profilin prevents the polymerization of actin, whereas it enhances it at low concentrations. The polypeptide is Profilin-1 (Olea europaea (Common olive)).